The chain runs to 333 residues: Glycerol-3-phosphate dehydrogenase [NAD(P)+] (333 aa).

The NADPH site is built by W15 and K108. Sn-glycerol 3-phosphate contacts are provided by K108, G136, and S138. A140 is a binding site for NADPH. Sn-glycerol 3-phosphate-binding residues include K191, D244, S254, R255, and N256. The active-site Proton acceptor is the K191. NADPH is bound at residue R255. 2 residues coordinate NADPH: V279 and E281.

The protein belongs to the NAD-dependent glycerol-3-phosphate dehydrogenase family.

The protein localises to the cytoplasm. It carries out the reaction sn-glycerol 3-phosphate + NAD(+) = dihydroxyacetone phosphate + NADH + H(+). The catalysed reaction is sn-glycerol 3-phosphate + NADP(+) = dihydroxyacetone phosphate + NADPH + H(+). Its pathway is membrane lipid metabolism; glycerophospholipid metabolism. In terms of biological role, catalyzes the reduction of the glycolytic intermediate dihydroxyacetone phosphate (DHAP) to sn-glycerol 3-phosphate (G3P), the key precursor for phospholipid synthesis. In Maricaulis maris (strain MCS10) (Caulobacter maris), this protein is Glycerol-3-phosphate dehydrogenase [NAD(P)+].